A 421-amino-acid polypeptide reads, in one-letter code: Membrane-associated protein UidC (421 aa).

The first 23 residues, 1 to 23 (MRKIVAMAVICLTAASGLTSAYA), serve as a signal peptide directing secretion.

It belongs to the outer membrane porin (Opr) (TC 1.B.25) family.

Its subcellular location is the cell outer membrane. Enhances the activity of the UidB (GusB) glucuronide transporter, on its own however it has no transport activity. Glucuronide transport does not occur in strain K12 due to a variant at position 100 of the UidB (GusB, AC P0CE44, AC P0CE45) protein. This chain is Membrane-associated protein UidC (uidC), found in Escherichia coli (strain K12).